Here is an 887-residue protein sequence, read N- to C-terminus: Phosphatidylinositol 3-kinase catalytic subunit type 3 (887 aa).

Positions 35–184 (YKAVLEDPML…LAKLTKAHRQ (150 aa)) constitute a C2 PI3K-type domain. The tract at residues 149-170 (VEADGSEPTRTPGRTSSTLSED) is disordered. Residues 156–170 (PTRTPGRTSSTLSED) are compositionally biased toward polar residues. Thr-163 is subject to Phosphothreonine; by AMPK. The residue at position 165 (Ser-165) is a Phosphoserine; by AMPK. Ser-244, Ser-261, and Ser-282 each carry phosphoserine. In terms of domain architecture, PIK helical spans 283–520 (DHDLKPNATT…PKTHEMYLNV (238 aa)). The disordered stretch occupies residues 416–467 (EPTKKDSQASVSESLSSSGVSSADIDSSQIITNPLPPVASPPPASKSKEVSD). Residues 423–444 (QASVSESLSSSGVSSADIDSSQ) are compositionally biased toward low complexity. Over residues 449-459 (PLPPVASPPPA) the composition is skewed to pro residues. The 267-residue stretch at 605–871 (IPETATLFKS…LIDESVHALF (267 aa)) folds into the PI3K/PI4K catalytic domain. The tract at residues 611-617 (LFKSALM) is G-loop. A catalytic loop region spans residues 740-748 (GVGDRHLDN). Residues 759-780 (HIDFGYILGRDPKPLPPPMKLN) are activation loop.

It belongs to the PI3/PI4-kinase family. As to quaternary structure, component of the PI3K (PI3KC3/PI3K-III/class III phosphatidylinositol 3-kinase) complex the core of which is composed of the catalytic subunit PIK3C3, the regulatory subunit PIK3R4 and BECN1 associating with additional regulatory/auxiliary subunits to form alternative complex forms. Alternative complex forms containing a fourth regulatory subunit in a mutually exclusive manner are: the PI3K complex I (PI3KC3-C1) containing ATG14, and the PI3K complex II (PI3KC3-C2) containing UVRAG. PI3KC3-C1 displays a V-shaped architecture with PIK3R4 serving as a bridge between PIK3C3 and the ATG14:BECN1 subcomplex. Both, PI3KC3-C1 and PI3KC3-C2, can associate with further regulatory subunits such as RUBCN, SH3GLB1/Bif-1 and AMBRA1. PI3KC3-C1 probably associates with PIK3CB. Interacts with RAB7A in the presence of PIK3R4. Interacts with AMBRA1. Interacts with BECN1P1/BECN2. Interacts with SLAMF1. May interact with DYN2. May be a component of a complex composed of RAB5A (in GDP-bound form), DYN2 and PIK3C3. Interacts with NCKAP1L. Interacts with ATG14; this interaction is increased in the absence of TMEM39A. Interacts with STEEP1; the interaction is STING1-dependent and required for trafficking of STING1 from the endoplasmic reticulum. Interacts with YWHAG. Interacts with ARMC3. Requires Mn(2+) as cofactor. Ubiquitinated via 'Lys-29'- and 'Lys-48'-linked ubiquitination by UBE3C, promoting its degradation. Deubiquitination by ZRANB1/TRABID promotes its stabilization, leading to autophagosome maturation.

The protein localises to the midbody. Its subcellular location is the late endosome. It localises to the cytoplasmic vesicle. It is found in the autophagosome. The catalysed reaction is a 1,2-diacyl-sn-glycero-3-phospho-(1D-myo-inositol) + ATP = a 1,2-diacyl-sn-glycero-3-phospho-(1D-myo-inositol-3-phosphate) + ADP + H(+). In terms of biological role, catalytic subunit of the PI3K complex that mediates formation of phosphatidylinositol 3-phosphate; different complex forms are believed to play a role in multiple membrane trafficking pathways: PI3KC3-C1 is involved in initiation of autophagosomes and PI3KC3-C2 in maturation of autophagosomes and endocytosis. As part of PI3KC3-C1, promotes endoplasmic reticulum membrane curvature formation prior to vesicle budding. Involved in regulation of degradative endocytic trafficking and required for the abscission step in cytokinesis, probably in the context of PI3KC3-C2. Involved in the transport of lysosomal enzyme precursors to lysosomes. Required for transport from early to late endosomes. The sequence is that of Phosphatidylinositol 3-kinase catalytic subunit type 3 from Rattus norvegicus (Rat).